Reading from the N-terminus, the 283-residue chain is Acetyl-coenzyme A carboxylase carboxyl transferase subunit beta (283 aa).

One can recognise a CoA carboxyltransferase N-terminal domain in the interval 29–283 (LWVACPKCQQ…LKLHERGAHY (255 aa)). Residues Cys33, Cys36, Cys51, and Cys54 each contribute to the Zn(2+) site. The C4-type zinc finger occupies 33–54 (CPKCQQSIYHKDLGYYRTCPVC).

It belongs to the AccD/PCCB family. Acetyl-CoA carboxylase is a heterohexamer composed of biotin carboxyl carrier protein (AccB), biotin carboxylase (AccC) and two subunits each of ACCase subunit alpha (AccA) and ACCase subunit beta (AccD). Zn(2+) is required as a cofactor.

The protein localises to the cytoplasm. It catalyses the reaction N(6)-carboxybiotinyl-L-lysyl-[protein] + acetyl-CoA = N(6)-biotinyl-L-lysyl-[protein] + malonyl-CoA. The protein operates within lipid metabolism; malonyl-CoA biosynthesis; malonyl-CoA from acetyl-CoA: step 1/1. In terms of biological role, component of the acetyl coenzyme A carboxylase (ACC) complex. Biotin carboxylase (BC) catalyzes the carboxylation of biotin on its carrier protein (BCCP) and then the CO(2) group is transferred by the transcarboxylase to acetyl-CoA to form malonyl-CoA. The chain is Acetyl-coenzyme A carboxylase carboxyl transferase subunit beta from Latilactobacillus sakei subsp. sakei (strain 23K) (Lactobacillus sakei subsp. sakei).